Consider the following 72-residue polypeptide: Translation initiation factor IF-1 1 (72 aa).

Positions 1–72 (MSKDDVIQMQ…TRARIVFRSK (72 aa)) constitute an S1-like domain.

It belongs to the IF-1 family. As to quaternary structure, component of the 30S ribosomal translation pre-initiation complex which assembles on the 30S ribosome in the order IF-2 and IF-3, IF-1 and N-formylmethionyl-tRNA(fMet); mRNA recruitment can occur at any time during PIC assembly.

The protein resides in the cytoplasm. Its function is as follows. One of the essential components for the initiation of protein synthesis. Stabilizes the binding of IF-2 and IF-3 on the 30S subunit to which N-formylmethionyl-tRNA(fMet) subsequently binds. Helps modulate mRNA selection, yielding the 30S pre-initiation complex (PIC). Upon addition of the 50S ribosomal subunit IF-1, IF-2 and IF-3 are released leaving the mature 70S translation initiation complex. The chain is Translation initiation factor IF-1 1 from Bordetella avium (strain 197N).